Consider the following 611-residue polypeptide: Glutamine--fructose-6-phosphate aminotransferase [isomerizing] (611 aa).

The active-site Nucleophile; for GATase activity is the Cys2. The Glutamine amidotransferase type-2 domain occupies Cys2 to Asp219. SIS domains lie at Ala287–Arg427 and Val460–Pro601. The For Fru-6P isomerization activity role is filled by Lys606.

Homodimer.

It localises to the cytoplasm. It carries out the reaction D-fructose 6-phosphate + L-glutamine = D-glucosamine 6-phosphate + L-glutamate. Its function is as follows. Catalyzes the first step in hexosamine metabolism, converting fructose-6P into glucosamine-6P using glutamine as a nitrogen source. The sequence is that of Glutamine--fructose-6-phosphate aminotransferase [isomerizing] from Pseudomonas aeruginosa (strain ATCC 15692 / DSM 22644 / CIP 104116 / JCM 14847 / LMG 12228 / 1C / PRS 101 / PAO1).